The chain runs to 309 residues: Malate dehydrogenase (309 aa).

Residues 6-11 and D31 contribute to the NAD(+) site; that span reads GSGRVG. Substrate contacts are provided by R80 and R86. NAD(+) contacts are provided by residues N93 and 116-118; that span reads TTN. 2 residues coordinate substrate: N118 and R149. H173 serves as the catalytic Proton acceptor.

The protein belongs to the LDH/MDH superfamily.

The enzyme catalyses (S)-malate + NAD(+) = oxaloacetate + NADH + H(+). In terms of biological role, catalyzes the reversible oxidation of malate to oxaloacetate. The polypeptide is Malate dehydrogenase (mdh) (Pyrobaculum aerophilum (strain ATCC 51768 / DSM 7523 / JCM 9630 / CIP 104966 / NBRC 100827 / IM2)).